The following is a 148-amino-acid chain: Probable DNA-directed RNA polymerases I, II, and III subunit RPABC3 (148 aa).

The non-specific ssDNA binding stretch occupies residues 16–40 (DPDGKKFDRVSRYFCDAESFKMELI).

The protein belongs to the eukaryotic RPB8 RNA polymerase subunit family. In terms of assembly, component of the RNA polymerase I (Pol I), RNA polymerase II (Pol II) and RNA polymerase III (Pol III) complexes consisting of at least 13, 12 and 17 subunits, respectively. Directly interacts with POLR2A.

It is found in the nucleus. Its function is as follows. DNA-dependent RNA polymerase catalyzes the transcription of DNA into RNA using the four ribonucleoside triphosphates as substrates. Common component of RNA polymerases I, II and III which synthesize ribosomal RNA precursors, mRNA precursors and many functional non-coding RNAs, and small RNAs, such as 5S rRNA and tRNAs, respectively. In Caenorhabditis elegans, this protein is Probable DNA-directed RNA polymerases I, II, and III subunit RPABC3 (rpb-8).